A 668-amino-acid chain; its full sequence is DNA ligase (668 aa).

NAD(+) contacts are provided by residues 34–38, 83–84, and E117; these read DAEYD and SL. The active-site N6-AMP-lysine intermediate is the K119. NAD(+)-binding residues include R140, E177, K293, and K317. Zn(2+)-binding residues include C411, C414, C429, and C434. One can recognise a BRCT domain in the interval 591-668; it reads RVGGRFTGKT…SEDDFLELMQ (78 aa).

It belongs to the NAD-dependent DNA ligase family. LigA subfamily. Requires Mg(2+) as cofactor. Mn(2+) is required as a cofactor.

The catalysed reaction is NAD(+) + (deoxyribonucleotide)n-3'-hydroxyl + 5'-phospho-(deoxyribonucleotide)m = (deoxyribonucleotide)n+m + AMP + beta-nicotinamide D-nucleotide.. DNA ligase that catalyzes the formation of phosphodiester linkages between 5'-phosphoryl and 3'-hydroxyl groups in double-stranded DNA using NAD as a coenzyme and as the energy source for the reaction. It is essential for DNA replication and repair of damaged DNA. The polypeptide is DNA ligase (Citrifermentans bemidjiense (strain ATCC BAA-1014 / DSM 16622 / JCM 12645 / Bem) (Geobacter bemidjiensis)).